A 178-amino-acid chain; its full sequence is Single-stranded DNA-binding protein 2 (178 aa).

The 106-residue stretch at 6–111 (VNKVILVGNL…VVVSQSGTMQ (106 aa)) folds into the SSB domain. The DNA-binding element occupies 55–61 (WHRVVLY). Positions 111–161 (QMLGGRNSAGSGQQQGGWGQPQQPAAPSHSGMPPQQHPANEPPMDFDDDIP) are disordered.

As to quaternary structure, homotetramer.

In Salmonella typhi, this protein is Single-stranded DNA-binding protein 2 (ssb2).